The chain runs to 72 residues: Translation initiation factor IF-1 (72 aa).

The region spanning 1–72 (MAKEEAIEVE…TRGRITYREK (72 aa)) is the S1-like domain.

Belongs to the IF-1 family. As to quaternary structure, component of the 30S ribosomal translation pre-initiation complex which assembles on the 30S ribosome in the order IF-2 and IF-3, IF-1 and N-formylmethionyl-tRNA(fMet); mRNA recruitment can occur at any time during PIC assembly.

It is found in the cytoplasm. Functionally, one of the essential components for the initiation of protein synthesis. Stabilizes the binding of IF-2 and IF-3 on the 30S subunit to which N-formylmethionyl-tRNA(fMet) subsequently binds. Helps modulate mRNA selection, yielding the 30S pre-initiation complex (PIC). Upon addition of the 50S ribosomal subunit IF-1, IF-2 and IF-3 are released leaving the mature 70S translation initiation complex. This is Translation initiation factor IF-1 from Syntrophotalea carbinolica (strain DSM 2380 / NBRC 103641 / GraBd1) (Pelobacter carbinolicus).